Here is a 574-residue protein sequence, read N- to C-terminus: Cocaine esterase (574 aa).

Residues 1–144 (MVDGNYSVAS…KAIAPSMASA (144 aa)) are 1A. Tyr-44 contacts substrate. Ser-117 acts as the Acyl-ester intermediate in catalysis. Tyr-118 contributes to the substrate binding site. Residues 145-240 (DLYRAPWYGP…NDESWQSISL (96 aa)) form a 2 region. The interval 241-354 (FERLGGLATP…WRDETDWPLP (114 aa)) is 1B. Residues Asp-259 and His-287 each act as charge relay system in the active site. The segment at 355–574 (DTAYTPFYLG…SHIVLPIIKR (220 aa)) is 3.

The protein belongs to the CocE/NonD hydrolase family. In terms of assembly, homodimer. The protein aggregates upon heat inactivation.

Its subcellular location is the cytoplasm. The catalysed reaction is cocaine + H2O = ecgonine methyl ester + benzoate + H(+). It functions in the pathway alkaloid degradation; cocaine degradation. Hydrolyzes cocaine to benzoate and ecgonine methyl ester, endowing the bacteria with the ability to utilize cocaine as a sole source of carbon and energy for growth, as this bacterium lives in the rhizosphere of coca plants. Also efficiently hydrolyzes cocaethylene, a more potent cocaine metabolite that has been observed in patients who concurrently abuse cocaine and alcohol. Is able to prevent cocaine-induced convulsions and lethality in rat. The sequence is that of Cocaine esterase (cocE) from Rhodococcus sp. (strain MB1 Bresler).